The chain runs to 98 residues: C-X-C motif chemokine 10 (98 aa).

A signal peptide spans Met-1–Gly-21. Arg-26 carries the citrulline modification. 2 disulfides stabilise this stretch: Cys-30/Cys-57 and Cys-32/Cys-74.

Belongs to the intercrine alpha (chemokine CxC) family.

It is found in the secreted. In terms of biological role, chemotactic for monocytes and T-lymphocytes. Binds to CXCR3. The protein is C-X-C motif chemokine 10 (CXCL10) of Macaca mulatta (Rhesus macaque).